A 319-amino-acid chain; its full sequence is MKVRLGVDMMGGDHDPLVVWEALEEVLLSLDGQPVEFSVFATPDVHQQLTHSPLSRSVQMIASESFVSMEDSVLAAVRKKRSSMALGLDSLQRGELDGFISAGNTAALVTLARAKIPMIPAVPRPALLVSVPTLSGFAVILDVGATVAVNPEEMVGFARMGLAYRQSLSSSDQSFTLGLLNIGSEERKGTDSHKHTFRMLRDVFGSAFLGNVESGDVFSGKVDIVVTDGFTGNVFLKTAEGLFDFLRHILGDHLEKTIKTRFDYTIYPGSIISGLSRLVIKCHGKSRETALFGGISGAVDLARSNVCGRIAAKFGLEEA.

The protein belongs to the PlsX family. As to quaternary structure, homodimer. Probably interacts with PlsY.

It localises to the cytoplasm. The catalysed reaction is a fatty acyl-[ACP] + phosphate = an acyl phosphate + holo-[ACP]. It functions in the pathway lipid metabolism; phospholipid metabolism. Functionally, catalyzes the reversible formation of acyl-phosphate (acyl-PO(4)) from acyl-[acyl-carrier-protein] (acyl-ACP). This enzyme utilizes acyl-ACP as fatty acyl donor, but not acyl-CoA. This is Phosphate acyltransferase from Chlamydia muridarum (strain MoPn / Nigg).